Consider the following 443-residue polypeptide: EGF-containing fibulin-like extracellular matrix protein 2 (443 aa).

The signal sequence occupies residues 1-23; the sequence is MLPCASCLPGSLLLWALLLLLLG. The 46-residue stretch at 36–81 folds into the EGF-like 1; atypical domain; it reads YTECTDGYEWDPDSQHCRDVNECLTIPEACKGEMKCINHYGGYLCL. Intrachain disulfides connect Cys58–Cys121, Cys65–Cys80, Cys71–Cys109, Cys127–Cys140, Cys134–Cys149, Cys151–Cys162, Cys168–Cys177, Cys173–Cys186, Cys188–Cys201, Cys207–Cys217, Cys213–Cys226, Cys228–Cys241, Cys247–Cys258, Cys254–Cys267, Cys269–Cys281, Cys287–Cys300, Cys294–Cys309, and Cys315–Cys327. Positions 123-163 constitute an EGF-like 2; calcium-binding domain; the sequence is DVDECAQALHDCRPSQDCHNLPGSYQCTCPDGYRKIGPECV. The region spanning 164–202 is the EGF-like 3; calcium-binding domain; sequence DIDECRYRYCQHRCVNLPGSFRCQCEPGFQLGPNNRSCV. A glycan (N-linked (GlcNAc...) asparagine) is linked at Asn198. The region spanning 203–242 is the EGF-like 4; calcium-binding domain; the sequence is DVNECDMGAPCEQRCFNSYGTFLCRCHQGYELHRDGFSCS. An EGF-like 5; calcium-binding domain is found at 243–282; sequence DIDECSYSSYLCQYRCINEPGRFSCHCPQGYQLLATRLCQ. One can recognise an EGF-like 6; calcium-binding domain in the interval 283–328; sequence DIDECESGAHQCSEAQTCVNFHGGYRCVDTNRCVEPYIQVSENRCL. The N-linked (GlcNAc...) asparagine glycan is linked to Asn394.

Belongs to the fibulin family. In terms of assembly, homodimer; disulfide-linked. Multimer; allows heparin binding. Monomer. Interacts with FBN1 (via N-terminal domain); this interaction inhibits EFEMP2 binding to LOX and ELN. Interacts with LOX (via propeptide); this interaction is strong and facilitates formation of ternary complexes with ELN during elastic fiber assembly; this interaction limits interaction of EFEMP2 with FBLN5. Interacts with PITX2. Interacts with ELN with moderate affinity; this interaction regulates ELN self-assembly maturation stage. Interacts with FBLN5 with moderate affinity. Interacts with LOXL1 (via propeptide), LTBP1 and TGFB1 stronger than with LOXL2 and LTBP3. Interacts with PCOLCE. Interacts with collagen type IV trimer (COL4A1-COL4A1-COL4A2), NID2 and moderately with COL15A1-derived endostatin. Interacts with EMILIN1; this interaction promotes the incorporation of EFEMP2 into the extracellular matrix. Interacts with LTBP4; the LTBP4 long form (LTBP4L) has a stronger binding affinity than the LTBP4 short form and the LTBP4 long form promotes fibrillar deposition of EFEMP2. In terms of processing, N-glycosylated; contains mostly complex-type glycans. Not O-glycosylated. Post-translationally, cleaved by ELANE; produces a 50-55 kDa fragment. Cleaved by MMP2 and MMP9; produces several fragments.

It localises to the secreted. Its subcellular location is the extracellular space. The protein resides in the extracellular matrix. The protein localises to the basement membrane. In terms of biological role, plays a crucial role in elastic fiber formation in tissue, and in the formation of ultrastructural connections between elastic laminae and smooth muscle cells in the aorta, therefore participates in terminal differentiation and maturation of smooth muscle cell (SMC) and in the mechanical properties and wall integrity maintenance of the aorta. In addition, is involved in the control of collagen fibril assembly in tissue throught proteolytic activation of LOX leading to cross- linking of collagen and elastin. Also promotes ELN coacervation and participates in the deposition of ELN coacervates on to microfibrils but also regulates ELN cross- linking through LOX interaction. Moreover adheres to the cells through heparin binding in a calcium-dependent manner and regulates vascularlar smooth muscle cells proliferation through angiotensin signaling. The chain is EGF-containing fibulin-like extracellular matrix protein 2 from Homo sapiens (Human).